Here is a 111-residue protein sequence, read N- to C-terminus: Nucleoid-associated protein NMCC_1355 (111 aa).

This sequence belongs to the YbaB/EbfC family. Homodimer.

Its subcellular location is the cytoplasm. It is found in the nucleoid. Binds to DNA and alters its conformation. May be involved in regulation of gene expression, nucleoid organization and DNA protection. This chain is Nucleoid-associated protein NMCC_1355, found in Neisseria meningitidis serogroup C (strain 053442).